The chain runs to 65 residues: Large ribosomal subunit protein bL35 (65 aa).

Positions 1–28 are disordered; that stretch reads MPKMKTHRGAAKRFKKTGTGKIKRGQSK.

The protein belongs to the bacterial ribosomal protein bL35 family.

This chain is Large ribosomal subunit protein bL35, found in Acidobacterium capsulatum (strain ATCC 51196 / DSM 11244 / BCRC 80197 / JCM 7670 / NBRC 15755 / NCIMB 13165 / 161).